The following is a 268-amino-acid chain: MESQTIVEALLLGLLEGLTEFIPVSSTGHILLAGHFLGFNSTGKAFEILIQLGAILAILSVYFRRLWQMLLDLPHDRLTRHFVIGILIAFLPAAIIGALAHDFIKTVLFESPRLICTMLIIGGVILLAVDRMNLKPVYRDVERFPTRLYLQIGLFQCLSLIPGTSRSGSTIVGALLLGVDKRAAAEFSFFLAIPTMVGAFAFDLFKNRNVLTSADLPIIAIGFVAAFVTALFVVRYLLDYVSRNGYSLFGWWRLVVGIVGLVALMIWG.

7 consecutive transmembrane segments (helical) span residues Thr5 to Ser25, Gly43 to Phe63, His81 to His101, Val107 to Leu127, Ala185 to Phe205, Ala214 to Val234, and Leu248 to Gly268.

Belongs to the UppP family.

It is found in the cell inner membrane. The enzyme catalyses di-trans,octa-cis-undecaprenyl diphosphate + H2O = di-trans,octa-cis-undecaprenyl phosphate + phosphate + H(+). Functionally, catalyzes the dephosphorylation of undecaprenyl diphosphate (UPP). Confers resistance to bacitracin. The sequence is that of Undecaprenyl-diphosphatase 1 from Mesorhizobium japonicum (strain LMG 29417 / CECT 9101 / MAFF 303099) (Mesorhizobium loti (strain MAFF 303099)).